A 183-amino-acid polypeptide reads, in one-letter code: Small ribosomal subunit protein uS4c (183 aa).

In terms of domain architecture, S4 RNA-binding spans 82-143; the sequence is MRLDNILFRL…KQRSKALIQN (62 aa).

This sequence belongs to the universal ribosomal protein uS4 family. As to quaternary structure, part of the 30S ribosomal subunit. Contacts protein S5. The interaction surface between S4 and S5 is involved in control of translational fidelity.

The protein resides in the plastid. Its subcellular location is the chloroplast. Functionally, one of the primary rRNA binding proteins, it binds directly to 16S rRNA where it nucleates assembly of the body of the 30S subunit. With S5 and S12 plays an important role in translational accuracy. This is Small ribosomal subunit protein uS4c (rps4) from Freesia sp. (strain Lejeune 1997).